Consider the following 416-residue polypeptide: E3 ubiquitin-protein ligase makorin-2 (416 aa).

C3H1-type zinc fingers lie at residues 2 to 29 (STKQ…HDLA) and 31 to 58 (SKPS…HTRP). A compositionally biased stretch (basic and acidic residues) spans 113 to 122 (NLSGMAERKT). The interval 113–142 (NLSGMAERKTQPSMVSNPGSCSDPQPSPEM) is disordered. The segment covering 123–136 (QPSMVSNPGSCSDP) has biased composition (polar residues). The residue at position 139 (Ser139) is a Phosphoserine. Residues 165–192 (SNEQQLCPYAAAGECRFGDACVYLHGEV) form a C3H1-type 3 zinc finger. A makorin-type Cys-His region spans residues 193-222 (CEICRLQVLHPFDPEQRKAHEKICMLTFEH). An RING-type zinc finger spans residues 238 to 292 (CSICMEVILEKASASERRFGILSNCNHTYCLSCIRQWRCAKQFENPIIKSCPECR). The C3H1-type 4 zinc finger occupies 321 to 350 (GMGKKACKYFEQGKGTCPFGSKCLYRHAYP).

Interacts with PDLIM2 (via LIM zinc-binding domain). Interacts with RELA. As to expression, expressed in sperm, with significantly reduced expression in sperm of patients with oligoasthenoteratozoospermia (at protein level). Widely expressed with expression in testis, ovary, small intestine, colon, peripheral blood leukocytes, fetal liver, bone marrow, thymus, lymph node and spleen.

The protein localises to the cytoplasm. It localises to the nucleus. The catalysed reaction is S-ubiquitinyl-[E2 ubiquitin-conjugating enzyme]-L-cysteine + [acceptor protein]-L-lysine = [E2 ubiquitin-conjugating enzyme]-L-cysteine + N(6)-ubiquitinyl-[acceptor protein]-L-lysine.. It participates in protein modification; protein ubiquitination. In terms of biological role, E3 ubiquitin ligase catalyzing the covalent attachment of ubiquitin moieties onto substrate proteins. Promotes the polyubiquitination and proteasome-dependent degradation of RELA/p65, thereby suppressing RELA-mediated NF-kappaB transactivation and negatively regulating inflammatory responses. Plays a role in the regulation of spermiation and in male fertility. The sequence is that of E3 ubiquitin-protein ligase makorin-2 (MKRN2) from Homo sapiens (Human).